Reading from the N-terminus, the 63-residue chain is Bowman-Birk type proteinase inhibitor (63 aa).

7 disulfides stabilise this stretch: Cys8–Cys61, Cys9–Cys24, Cys12–Cys57, Cys14–Cys22, Cys31–Cys38, Cys35–Cys50, and Cys40–Cys48.

Belongs to the Bowman-Birk serine protease inhibitor family.

Functionally, this inhibitor has two domains, each with separate antiprotease activity. Inhibits bovine trypsin and chymotrypsin, in a molar ratio of 1:1. The trypsin inhibition of FBI is independent of chymotrypsin inhibition, but the chymotrypsin inhibition is not completely independent of trypsin inhibition. This chain is Bowman-Birk type proteinase inhibitor, found in Vicia faba (Broad bean).